A 720-amino-acid chain; its full sequence is uncharacterized protein (720 aa).

Gly-2 carries the N-myristoyl glycine; by host lipid modification.

This is an uncharacterized protein from Cryphonectria parasitica mycoreovirus 1 (strain 9B21) (CpMYRV-1).